The sequence spans 710 residues: Dihydroxyacetone synthase (710 aa).

Thiamine diphosphate is bound by residues histidine 78 and 128–130 (GPL). Mg(2+)-binding residues include aspartate 169, asparagine 199, and valine 201. Asparagine 199 provides a ligand contact to thiamine diphosphate. Histidine 275, glutamate 433, and phenylalanine 461 together coordinate thiamine diphosphate. Glutamate 433 serves as the catalytic Proton donor. A Microbody targeting signal motif is present at residues 708-710 (NKL).

Belongs to the transketolase family. The cofactor is Mg(2+). Requires Ca(2+) as cofactor. Mn(2+) serves as cofactor. It depends on Co(2+) as a cofactor. Thiamine diphosphate is required as a cofactor.

The protein localises to the peroxisome. The enzyme catalyses D-xylulose 5-phosphate + formaldehyde = dihydroxyacetone + D-glyceraldehyde 3-phosphate. In terms of biological role, this is the major methanol assimilatory enzyme from the methylotrophic Hansenula polymorpha. This is Dihydroxyacetone synthase (DAS) from Pichia angusta (Yeast).